The chain runs to 766 residues: 5-methyltetrahydropteroyltriglutamate--homocysteine methyltransferase (766 aa).

5-methyltetrahydropteroyltri-L-glutamate-binding positions include 23–26 and K121; that span reads RELK. L-homocysteine is bound by residues 438–440 and E491; that span reads IGS. L-methionine contacts are provided by residues 438–440 and E491; that span reads IGS. Residues 522–523 and W568 each bind 5-methyltetrahydropteroyltri-L-glutamate; that span reads RC. L-homocysteine is bound at residue D606. D606 contacts L-methionine. A 5-methyltetrahydropteroyltri-L-glutamate-binding site is contributed by E612. Positions 648, 650, and 672 each coordinate Zn(2+). H701 functions as the Proton donor in the catalytic mechanism. C733 contributes to the Zn(2+) binding site.

This sequence belongs to the vitamin-B12 independent methionine synthase family. Zn(2+) is required as a cofactor.

It carries out the reaction 5-methyltetrahydropteroyltri-L-glutamate + L-homocysteine = tetrahydropteroyltri-L-glutamate + L-methionine. Its pathway is amino-acid biosynthesis; L-methionine biosynthesis via de novo pathway; L-methionine from L-homocysteine (MetE route): step 1/1. Its function is as follows. Catalyzes the transfer of a methyl group from 5-methyltetrahydrofolate to homocysteine resulting in methionine formation. The sequence is that of 5-methyltetrahydropteroyltriglutamate--homocysteine methyltransferase from Photobacterium profundum (strain SS9).